Here is a 212-residue protein sequence, read N- to C-terminus: MADRSGGSTAGDTVPAPPPVRRRSSANYRAYATEPHAKKKSKISASRKLQLKTLMLQIAKQELEREAEERRGEKGRALSTRCQPLELAGLGFAELQDLCRQLHARVDKVDEERYDVEAKVTKNITEIADLNQKIFDLRGKFKRPTLRRVRISADAMMQALLGARAKETLDLRAHLKQVKKEDTEKENREVGDWRKNIDALSGMEGRKKKFEG.

Residues 1-11 are compositionally biased toward polar residues; it reads MADRSGGSTAG. The segment at 1-45 is disordered; the sequence is MADRSGGSTAGDTVPAPPPVRRRSSANYRAYATEPHAKKKSKISA. A2 is modified (N-acetylalanine). S5 is modified (phosphoserine). S24 and S25 each carry phosphoserine; by PKA and PKD/PRKD1. Y28 carries the post-translational modification Phosphotyrosine. Residue T33 is modified to Phosphothreonine; by STK4/MST1. The segment at 34–81 is involved in binding TNC; it reads EPHAKKKSKISASRKLQLKTLMLQIAKQELEREAEERRGEKGRALSTR. S44 and S46 each carry phosphoserine; by PKC/PRKCE. T53 carries the post-translational modification Phosphothreonine; by STK4/MST1. S79 is subject to Phosphoserine. Phosphothreonine is present on T80. An involved in binding TNC and actin region spans residues 131–151; that stretch reads NQKIFDLRGKFKRPTLRRVRI. A Phosphothreonine; by STK4/MST1 modification is found at T145. The residue at position 152 (S152) is a Phosphoserine; by PAK3. T183 is subject to Phosphothreonine. S201 carries the post-translational modification Phosphoserine.

The protein belongs to the troponin I family. Interacts with TRIM63. Binds to actin and tropomyosin. Interacts with STK4/MST1. In terms of processing, phosphorylated at Ser-24 and Ser-25 by PRKD1; phosphorylation reduces myofilament calcium sensitivity. Phosphorylated preferentially at Thr-33. Phosphorylation by STK4/MST1 alters its binding affinity to TNNC1 (cardiac Tn-C) and TNNT2 (cardiac Tn-T). Phosphorylated at Ser-44 and Ser-46 by PRKCE; phosphorylation increases myocardium contractile dysfunction.

Troponin I is the inhibitory subunit of troponin, the thin filament regulatory complex which confers calcium-sensitivity to striated muscle actomyosin ATPase activity. This chain is Troponin I, cardiac muscle (TNNI3), found in Bos taurus (Bovine).